The sequence spans 770 residues: PH and SEC7 domain-containing protein 2 (770 aa).

The segment covering 1-24 (MDEEKLPCELHKEGSATQEDHGLE) has biased composition (basic and acidic residues). Disordered stretches follow at residues 1–65 (MDEE…RGPD) and 181–304 (IQQR…ANGC). Residues 32-45 (QNGTAASEGLSSHI) are compositionally biased toward polar residues. Ser188 carries the post-translational modification Phosphoserine. Low complexity-rich tracts occupy residues 216-234 (LGSPLRRSISSSRSENVLS) and 285-296 (ELSSSEGLEPGS). The region spanning 256–459 (DDEDDEDTDK…KTLYNSIKNE (204 aa)) is the SEC7 domain. The region spanning 509 to 622 (TTYKHGVLTR…WILRINLVAA (114 aa)) is the PH domain. A helical membrane pass occupies residues 619-636 (LVAAIFSAPAFPAAVSSM). Positions 650–677 (RLCQEEQLRSHENKLRQVTAELAEHRCH) form a coiled coil. A disordered region spans residues 738–770 (PALRKTHSSPALSLGHGPVTGSKATKDTSASDT).

It belongs to the PSD family.

It is found in the cell membrane. Its subcellular location is the cell projection. The protein resides in the ruffle membrane. It localises to the cleavage furrow. This is PH and SEC7 domain-containing protein 2 (Psd2) from Mus musculus (Mouse).